We begin with the raw amino-acid sequence, 465 residues long: MMSSPIPHQQTIAAVATAVAPGQGGIAVVRLSGPAAEVVGRSVVSIPGQQLWVSHRVLYGHVMDESGKERIDEVLVLLMKGPRSFTGEDVVEIHCHGGLMAVQRVLERVLAQPHVRRALPGEFSQRAVLNGRLDLTQAEAISELVAARSRRAAQLAMTGVDGGIQRRITSLRERLLDQLSELEARVDFEEDLPPLDAAELLLELQCVRRELEQLVEDAKRGDVLRQGLQVALVGRPNVGKSSLLNRLSRRERAIVTDLPGTTRDVLESEIVLEGVPITLVDTAGIRATKDALEQLGIDRSHQALAAADVAVLVFDLSLGWTADDAALLAQIPDDLPRLLVGNKADLQPASMTASLSNEVDGKTVDVMLSALTGQGEEALIEAVLKTCGASEAQGLVVALNQRQQDLAATAAIALARTQEAAAQKLPWDFWTIDLRQAISSLGEITGEEITEAVLDRIFSRFCIGK.

(6S)-5-formyl-5,6,7,8-tetrahydrofolate is bound by residues Arg-30, Glu-92, and Arg-132. The 162-residue stretch at 227-388 folds into the TrmE-type G domain; that stretch reads GLQVALVGRP…LIEAVLKTCG (162 aa). Asn-237 lines the K(+) pocket. GTP contacts are provided by residues 237–242, 256–262, 281–284, and 342–345; these read NVGKSS, TDLPGTT, DTAG, and NKAD. Ser-241 lines the Mg(2+) pocket. Residues Thr-256, Leu-258, and Thr-261 each coordinate K(+). A Mg(2+)-binding site is contributed by Thr-262. Residue Lys-465 coordinates (6S)-5-formyl-5,6,7,8-tetrahydrofolate.

This sequence belongs to the TRAFAC class TrmE-Era-EngA-EngB-Septin-like GTPase superfamily. TrmE GTPase family. As to quaternary structure, homodimer. Heterotetramer of two MnmE and two MnmG subunits. Requires K(+) as cofactor.

It is found in the cytoplasm. Its function is as follows. Exhibits a very high intrinsic GTPase hydrolysis rate. Involved in the addition of a carboxymethylaminomethyl (cmnm) group at the wobble position (U34) of certain tRNAs, forming tRNA-cmnm(5)s(2)U34. The sequence is that of tRNA modification GTPase MnmE from Prochlorococcus marinus (strain MIT 9303).